The following is a 471-amino-acid chain: Putative multidrug resistance protein MdtD (471 aa).

Residues 1–11 (MTELPDSTRWQ) lie on the Periplasmic side of the membrane. A helical transmembrane segment spans residues 12-32 (LWIVAFGFFMQSLDTTIVNTA). Over 33-48 (LPSMAQSLGESPLHMH) the chain is Cytoplasmic. A helical membrane pass occupies residues 49–69 (MVIVSYVLTVAVMLPASGWLA). The Periplasmic segment spans residues 70–76 (DKVGVRN). The helical transmembrane segment at 77-97 (IFFTAIVLFTLGSLFCALSGT) threads the bilayer. At 98–101 (LNEL) the chain is on the cytoplasmic side. A helical membrane pass occupies residues 102 to 124 (LLARALQGVGGAMMVPVGRLTVM). Over 125 to 137 (KIVPREQYMAAMT) the chain is Periplasmic. The helical transmembrane segment at 138-158 (FVTLPGQVGPLLGPALGGLLV) threads the bilayer. At 159 to 164 (EYASWH) the chain is on the cytoplasmic side. A helical transmembrane segment spans residues 165-185 (WIFLINIPVGIIGAIATLLLM). Residues 186-196 (PNYTMQTRRFD) lie on the Periplasmic side of the membrane. A helical transmembrane segment spans residues 197 to 217 (LSGFLLLAVGMAVLTLALDGS). Residues 218–224 (KGTGLSP) lie on the Cytoplasmic side of the membrane. A helical membrane pass occupies residues 225–245 (LAIAGLVAVGVVALVLYLLHA). Residues 246-262 (RNNNRALFSLKLFRTRT) are Periplasmic-facing. The helical transmembrane segment at 263 to 283 (FSLGLAGSFAGRIGSGMLPFM) threads the bilayer. Over 284–285 (TP) the chain is Cytoplasmic. The chain crosses the membrane as a helical span at residues 286–306 (VFLQIGLGFSPFHAGLMMIPM). Topologically, residues 307–341 (VLGSMGMKRIVVQVVNRFGYRRVLVATTLGLSLIT) are periplasmic. Residues 342 to 362 (LLFMTTALLGWYYVLPFVLFL) traverse the membrane as a helical segment. The Cytoplasmic segment spans residues 363-395 (QGMVNSTRFSSMNTLTLKDLPDNLASSGNSLLS). A helical membrane pass occupies residues 396–416 (MIMQLSMSIGVTIAGLLLGLF). Over 417–430 (GSQHVSVDSGTTQT) the chain is Periplasmic. The chain crosses the membrane as a helical span at residues 431–451 (VFMYTWLSMAFIIALPAFIFA). Residues 452–471 (RVPNDTHQNVAISRRKRSAQ) lie on the Cytoplasmic side of the membrane.

This sequence belongs to the major facilitator superfamily. TCR/Tet family.

It is found in the cell inner membrane. This Shigella sonnei (strain Ss046) protein is Putative multidrug resistance protein MdtD.